The following is a 316-amino-acid chain: Homoserine O-succinyltransferase (316 aa).

Cysteine 142 serves as the catalytic Acyl-thioester intermediate. Lysine 163 and serine 192 together coordinate substrate. The active-site Proton acceptor is the histidine 235. Residue glutamate 237 is part of the active site. Position 249 (arginine 249) interacts with substrate.

The protein belongs to the MetA family.

The protein resides in the cytoplasm. It carries out the reaction L-homoserine + succinyl-CoA = O-succinyl-L-homoserine + CoA. The protein operates within amino-acid biosynthesis; L-methionine biosynthesis via de novo pathway; O-succinyl-L-homoserine from L-homoserine: step 1/1. Transfers a succinyl group from succinyl-CoA to L-homoserine, forming succinyl-L-homoserine. In Shewanella amazonensis (strain ATCC BAA-1098 / SB2B), this protein is Homoserine O-succinyltransferase.